Here is a 273-residue protein sequence, read N- to C-terminus: tRNA pseudouridine synthase B (273 aa).

Residue D38 is the Nucleophile of the active site.

This sequence belongs to the pseudouridine synthase TruB family. Type 1 subfamily.

The catalysed reaction is uridine(55) in tRNA = pseudouridine(55) in tRNA. Its function is as follows. Responsible for synthesis of pseudouridine from uracil-55 in the psi GC loop of transfer RNAs. This Campylobacter concisus (strain 13826) protein is tRNA pseudouridine synthase B.